The chain runs to 231 residues: NADH-ubiquinone oxidoreductase chain 4 (231 aa).

Transmembrane regions (helical) follow at residues 1–21, 34–54, 63–85, 89–111, 128–148, 169–189, and 211–231; these read PIAG…YGII, VFLP…LTCL, IAYS…TPWG, AMAL…NTTY, MMPM…AIPP, TIIM…HMFL, and LLMT…ELVT.

Belongs to the complex I subunit 4 family.

It is found in the mitochondrion membrane. The enzyme catalyses a ubiquinone + NADH + 5 H(+)(in) = a ubiquinol + NAD(+) + 4 H(+)(out). Core subunit of the mitochondrial membrane respiratory chain NADH dehydrogenase (Complex I) that is believed to belong to the minimal assembly required for catalysis. Complex I functions in the transfer of electrons from NADH to the respiratory chain. The immediate electron acceptor for the enzyme is believed to be ubiquinone. In Sistrurus miliarius (Pigmy rattlesnake), this protein is NADH-ubiquinone oxidoreductase chain 4 (MT-ND4).